Reading from the N-terminus, the 219-residue chain is Probable glucosamine 6-phosphate N-acetyltransferase (219 aa).

Residues 42–198 (MKVRPLKDTD…EGPTLKRNAT (157 aa)) enclose the N-acetyltransferase domain. Residues Thr-64, 111-114 (KFIH), and 123-125 (EDV) each bind substrate. Position 133–138 (133–138 (GKQLGK)) interacts with acetyl-CoA. Residues 154–155 (YK) and Arg-186 contribute to the substrate site.

The protein belongs to the acetyltransferase family. GNA1 subfamily.

The catalysed reaction is D-glucosamine 6-phosphate + acetyl-CoA = N-acetyl-D-glucosamine 6-phosphate + CoA + H(+). The protein operates within nucleotide-sugar biosynthesis; UDP-N-acetyl-alpha-D-glucosamine biosynthesis; N-acetyl-alpha-D-glucosamine 1-phosphate from alpha-D-glucosamine 6-phosphate (route I): step 1/2. The protein is Probable glucosamine 6-phosphate N-acetyltransferase of Drosophila melanogaster (Fruit fly).